Consider the following 191-residue polypeptide: MNNSFFRKNSKIYIISGNLKGRKISFKNIPNLRPTTNQIRETLFEWLSKYIKNSRCLDCFAGSGVLGIEAISRYAAFSTLLEIEKKTFLTLKKNIKELNIYNVEIIRTNTLHWLKKTRNKPYDIIFIDPPYHQGLVKKTINLLENKKWIKKNSFIYIEQEKKQSIIVPKNWTLYKKKITNQIQCYLYICST.

It belongs to the methyltransferase superfamily. RsmD family.

The enzyme catalyses guanosine(966) in 16S rRNA + S-adenosyl-L-methionine = N(2)-methylguanosine(966) in 16S rRNA + S-adenosyl-L-homocysteine + H(+). Specifically methylates the guanine in position 966 of 16S rRNA in the assembled 30S particle. The sequence is that of Ribosomal RNA small subunit methyltransferase D (rsmD) from Buchnera aphidicola subsp. Acyrthosiphon pisum (strain APS) (Acyrthosiphon pisum symbiotic bacterium).